The primary structure comprises 154 residues: Large ribosomal subunit protein bL9c (154 aa).

This sequence belongs to the bacterial ribosomal protein bL9 family.

The protein resides in the plastid. Its subcellular location is the chloroplast. Binds to the 23S rRNA. This chain is Large ribosomal subunit protein bL9c, found in Gracilaria tenuistipitata var. liui (Red alga).